We begin with the raw amino-acid sequence, 526 residues long: ATP synthase subunit alpha (526 aa).

171–178 contributes to the ATP binding site; it reads GDRQTGKT.

Belongs to the ATPase alpha/beta chains family. In terms of assembly, F-type ATPases have 2 components, CF(1) - the catalytic core - and CF(0) - the membrane proton channel. CF(1) has five subunits: alpha(3), beta(3), gamma(1), delta(1), epsilon(1). CF(0) has three main subunits: a(1), b(2) and c(9-12). The alpha and beta chains form an alternating ring which encloses part of the gamma chain. CF(1) is attached to CF(0) by a central stalk formed by the gamma and epsilon chains, while a peripheral stalk is formed by the delta and b chains.

It is found in the cell membrane. The enzyme catalyses ATP + H2O + 4 H(+)(in) = ADP + phosphate + 5 H(+)(out). Its function is as follows. Produces ATP from ADP in the presence of a proton gradient across the membrane. The alpha chain is a regulatory subunit. In Christiangramia forsetii (strain DSM 17595 / CGMCC 1.15422 / KT0803) (Gramella forsetii), this protein is ATP synthase subunit alpha.